Consider the following 249-residue polypeptide: Probable transcriptional regulatory protein LIC_12886 (249 aa).

This sequence belongs to the TACO1 family.

It localises to the cytoplasm. This is Probable transcriptional regulatory protein LIC_12886 from Leptospira interrogans serogroup Icterohaemorrhagiae serovar copenhageni (strain Fiocruz L1-130).